Reading from the N-terminus, the 464-residue chain is ATP synthase subunit beta (464 aa).

148 to 155 is a binding site for ATP; it reads GGAGVGKT.

This sequence belongs to the ATPase alpha/beta chains family. F-type ATPases have 2 components, CF(1) - the catalytic core - and CF(0) - the membrane proton channel. CF(1) has five subunits: alpha(3), beta(3), gamma(1), delta(1), epsilon(1). CF(0) has three main subunits: a(1), b(2) and c(9-12). The alpha and beta chains form an alternating ring which encloses part of the gamma chain. CF(1) is attached to CF(0) by a central stalk formed by the gamma and epsilon chains, while a peripheral stalk is formed by the delta and b chains.

It is found in the cell inner membrane. It carries out the reaction ATP + H2O + 4 H(+)(in) = ADP + phosphate + 5 H(+)(out). Functionally, produces ATP from ADP in the presence of a proton gradient across the membrane. The catalytic sites are hosted primarily by the beta subunits. In Acinetobacter baylyi (strain ATCC 33305 / BD413 / ADP1), this protein is ATP synthase subunit beta.